The following is a 514-amino-acid chain: Arabinose import ATP-binding protein AraG (514 aa).

2 ABC transporter domains span residues 16–251 (LRFN…MVGR) and 251–507 (RDIQ…LPRH). An ATP-binding site is contributed by 48–55 (GENGAGKS).

This sequence belongs to the ABC transporter superfamily. Arabinose importer (TC 3.A.1.2.2) family. As to quaternary structure, the complex is composed of two ATP-binding proteins (AraG), two transmembrane proteins (AraH) and a solute-binding protein (AraF).

The protein resides in the cell inner membrane. The catalysed reaction is L-arabinose(out) + ATP + H2O = L-arabinose(in) + ADP + phosphate + H(+). In terms of biological role, part of the ABC transporter complex AraFGH involved in arabinose import. Responsible for energy coupling to the transport system. The polypeptide is Arabinose import ATP-binding protein AraG (Pseudomonas fluorescens (strain Pf0-1)).